A 261-amino-acid chain; its full sequence is MDSSAVITQISKEEARGPLRGKGDQKSAASQKPRSRGILHSLFCCVCRDDGEALPAHSGAPLLVEENGAIPKQTPVQYLLPEAKAQDSDKICVVIDLDETLVHSSFKPVNNADFIIPVEIDGVVHQVYVLKRPHVDEFLQRMGELFECVLFTASLAKYADPVADLLDKWGAFRARLFRESCVFHRGNYVKDLSRLGRDLRRVLILDNSPASYVFHPDNAVPVASWFDNMSDTELHDLLPFFEQLSRVDDVYSVLRQPRPGS.

Met1 carries the post-translational modification N-acetylmethionine. Residues Met1–Ile10 are compositionally biased toward polar residues. The segment at Met1–Pro33 is disordered. Basic and acidic residues predominate over residues Ser11–Gln25. Positions Gln86–Leu244 constitute an FCP1 homology domain. Catalysis depends on Asp96, which acts as the 4-aspartylphosphate intermediate. The Mg(2+) site is built by Asp96, Asp98, and Asn207. Asp98 serves as the catalytic Proton donor.

As to quaternary structure, monomer. Interacts with GTF2F1. Interacts with REST. Mg(2+) serves as cofactor. In terms of tissue distribution, expression is restricted to non-neuronal tissues. Highest expression in skeletal muscle, spleen, lung and placenta.

The protein localises to the nucleus. It carries out the reaction O-phospho-L-seryl-[protein] + H2O = L-seryl-[protein] + phosphate. The catalysed reaction is O-phospho-L-threonyl-[protein] + H2O = L-threonyl-[protein] + phosphate. Its activity is regulated as follows. Stimulated by GTF2F1. Inhibited by beryllofluoride anions. Its function is as follows. Preferentially catalyzes the dephosphorylation of 'Ser-5' within the tandem 7 residue repeats in the C-terminal domain (CTD) of the largest RNA polymerase II subunit POLR2A. Negatively regulates RNA polymerase II transcription, possibly by controlling the transition from initiation/capping to processive transcript elongation. Recruited by REST to neuronal genes that contain RE-1 elements, leading to neuronal gene silencing in non-neuronal cells. The chain is Carboxy-terminal domain RNA polymerase II polypeptide A small phosphatase 1 (CTDSP1) from Homo sapiens (Human).